Consider the following 242-residue polypeptide: Type III pantothenate kinase (242 aa).

Position 6–13 (6–13) interacts with ATP; that stretch reads DAGNTRIK. Substrate-binding positions include Y90 and 97 to 100; that span reads GADR. Catalysis depends on D99, which acts as the Proton acceptor. ATP is bound at residue T122. T172 contacts substrate.

This sequence belongs to the type III pantothenate kinase family. Homodimer. It depends on NH4(+) as a cofactor. K(+) serves as cofactor.

Its subcellular location is the cytoplasm. It carries out the reaction (R)-pantothenate + ATP = (R)-4'-phosphopantothenate + ADP + H(+). Its pathway is cofactor biosynthesis; coenzyme A biosynthesis; CoA from (R)-pantothenate: step 1/5. Catalyzes the phosphorylation of pantothenate (Pan), the first step in CoA biosynthesis. The sequence is that of Type III pantothenate kinase from Aromatoleum aromaticum (strain DSM 19018 / LMG 30748 / EbN1) (Azoarcus sp. (strain EbN1)).